Consider the following 203-residue polypeptide: HTH-type transcriptional regulator CymR (203 aa).

The HTH tetR-type domain occupies 13–73; that stretch reads METQGKLIAA…ATFEWLYEQI (61 aa). Residues 36-55 constitute a DNA-binding region (H-T-H motif); it reads RIADVPGAAGVSRGAQSHHF.

In terms of biological role, involved in the repression of the cym and cmt operons which are responsible of the p-cymene degradation. In Pseudomonas putida (Arthrobacter siderocapsulatus), this protein is HTH-type transcriptional regulator CymR.